The sequence spans 343 residues: TATA box-binding protein-like 2 (343 aa).

The interval 71 to 152 (PDEVTQENKD…SDSLSLASIT (82 aa)) is disordered. Positions 76–90 (QENKDQPVISKHETE) are enriched in basic and acidic residues. Residues 94-127 (ESQSPQSRLPSPSEQDVGLGLNSSSLSNSHSQLH) are compositionally biased toward low complexity. Over residues 143-152 (SDSLSLASIT) the composition is skewed to polar residues.

This sequence belongs to the TBP family. As to quaternary structure, interacts with TAF3. In terms of tissue distribution, ubiquitously expressed in all tissues examined with highest levels in heart, lung, ovary, spleen and testes.

The protein localises to the cytoplasm. The protein resides in the nucleus. In terms of biological role, transcription factor required in complex with TAF3 for the differentiation of myoblasts into myocytes. The complex replaces TFIID at specific promoters at an early stage in the differentiation process. The sequence is that of TATA box-binding protein-like 2 from Homo sapiens (Human).